Consider the following 391-residue polypeptide: Ammonium transporter Amt1 (391 aa).

The next 10 membrane-spanning stretches (helical) occupy residues 12 to 32 (VFFF…FIAL), 51 to 71 (LDLA…SYGF), 88 to 108 (AWWM…TGGV), 112 to 132 (IKIL…YPIV), 152 to 172 (AGSG…AYVL), 192 to 212 (IPIA…FNIG), 223 to 243 (LASV…GGAL), 261 to 281 (VAVC…VGLL), 305 to 325 (IGPV…IPFL), and 338 to 358 (GQII…LIIY).

The protein belongs to the ammonia transporter channel (TC 1.A.11.2) family. In terms of assembly, homotrimer. Interacts and forms a complex with GlnK1.

Its subcellular location is the cell membrane. Its activity is regulated as follows. Activity is regulated by the nitrogen regulatory protein GlnK1 via direct interaction. Formation of the GlnK1/Amt1 complex is decreased in the presence of Mg-ATP or 2-oxoglutarate. The presence of both effectors abolishes the formation of the complex. Its function is as follows. Involved in the uptake of ammonium/ammonia (NH(4)(+)/NH(3)). Transport is electrogenic. The polypeptide is Ammonium transporter Amt1 (Methanocaldococcus jannaschii (strain ATCC 43067 / DSM 2661 / JAL-1 / JCM 10045 / NBRC 100440) (Methanococcus jannaschii)).